Here is a 272-residue protein sequence, read N- to C-terminus: Methyl-CpG-binding domain-containing protein 2 (272 aa).

The span at 1–15 (MSMSQSRAVQRSSSP) shows a compositional bias: polar residues. The tract at residues 1-24 (MSMSQSRAVQRSSSPNEDRGENQL) is disordered. The segment at 53-112 (CPSIGAFTVQCASCFKWRLMPSMQKYEEIREQLLENPFFCDTAREWKPDISCDVPADIYQ) adopts a CW-type zinc-finger fold. An MBD-associated domain (MAD) motif is present at residues 62-104 (QCASCFKWRLMPSMQKYEEIREQLLENPFFCDTAREWKPDISC). Zn(2+) is bound by residues Cys63, Cys66, Cys92, and Cys104. Residues 118-192 (WAIDKPNISR…SQFSFQIPKP (75 aa)) form the MBD domain. Over residues 236-250 (LGTPTESGLNNSHYQ) the composition is skewed to polar residues. The tract at residues 236–272 (LGTPTESGLNNSHYQPSKKKKTSTLSIFGSNDELADR) is disordered.

In terms of assembly, interacts (via MBD domain) with DDM1. As to expression, expressed in buds, flowers, stems, siliques and mature seeds.

The protein resides in the nucleus. Its function is as follows. Probable transcriptional regulator. This chain is Methyl-CpG-binding domain-containing protein 2 (MBD2), found in Arabidopsis thaliana (Mouse-ear cress).